A 223-amino-acid chain; its full sequence is Putative 3-methyladenine DNA glycosylase (223 aa).

It belongs to the DNA glycosylase MPG family.

This Rickettsia typhi (strain ATCC VR-144 / Wilmington) protein is Putative 3-methyladenine DNA glycosylase.